We begin with the raw amino-acid sequence, 522 residues long: 2-isopropylmalate synthase (522 aa).

The region spanning 5 to 267 (VIIFDTTLRD…ETGINAKEIH (263 aa)) is the Pyruvate carboxyltransferase domain. Residues aspartate 14, histidine 202, histidine 204, and asparagine 238 each contribute to the Mn(2+) site. Residues 392–522 (QLQQLVVQSD…MQKNRELGGV (131 aa)) form a regulatory domain region.

It belongs to the alpha-IPM synthase/homocitrate synthase family. LeuA type 1 subfamily. As to quaternary structure, homodimer. Mn(2+) serves as cofactor.

The protein resides in the cytoplasm. It carries out the reaction 3-methyl-2-oxobutanoate + acetyl-CoA + H2O = (2S)-2-isopropylmalate + CoA + H(+). It participates in amino-acid biosynthesis; L-leucine biosynthesis; L-leucine from 3-methyl-2-oxobutanoate: step 1/4. Catalyzes the condensation of the acetyl group of acetyl-CoA with 3-methyl-2-oxobutanoate (2-ketoisovalerate) to form 3-carboxy-3-hydroxy-4-methylpentanoate (2-isopropylmalate). This chain is 2-isopropylmalate synthase, found in Shewanella baltica (strain OS155 / ATCC BAA-1091).